The primary structure comprises 144 residues: Large-conductance mechanosensitive channel (144 aa).

Transmembrane regions (helical) follow at residues 14–34 (VLDM…VTSF) and 81–101 (GTFL…FLII).

The protein belongs to the MscL family. As to quaternary structure, homopentamer.

The protein resides in the cell inner membrane. Functionally, channel that opens in response to stretch forces in the membrane lipid bilayer. May participate in the regulation of osmotic pressure changes within the cell. In Bdellovibrio bacteriovorus (strain ATCC 15356 / DSM 50701 / NCIMB 9529 / HD100), this protein is Large-conductance mechanosensitive channel.